Here is a 306-residue protein sequence, read N- to C-terminus: Reaction center protein M chain (306 aa).

3 helical membrane-spanning segments follow: residues 53–79, 111–140, and 143–168; these read GTTG…ASVN, GGWW…RALK, and THTA…LLMG. Positions 181 and 201 each coordinate (7R,8Z)-bacteriochlorophyll b. The chain crosses the membrane as a helical span at residues 198–226; it reads NPFHMLSIAFLYGSALLSAMHGATILAVS. The Fe cation site is built by histidine 218 and glutamate 233. Tryptophan 251 contacts a ubiquinone. Residues 260 to 286 form a helical membrane-spanning segment; it reads TMESIHRWAWWFAVLCTFTGAIGILLT. Position 265 (histidine 265) interacts with Fe cation.

It belongs to the reaction center PufL/M/PsbA/D family. As to quaternary structure, reaction center is composed of four bacteriochlorophylls, two bacteriopheophytins, two ubiquinones, one iron, and three highly hydrophobic polypeptide chains (designated L, M, and H).

It is found in the cellular chromatophore membrane. Functionally, the reaction center is a membrane-bound complex that mediates the initial photochemical event in the electron transfer process of photosynthesis. The sequence is that of Reaction center protein M chain (pufM) from Rhodospirillum rubrum.